The chain runs to 107 residues: Nucleoid-associated protein RC1337 (107 aa).

This sequence belongs to the YbaB/EbfC family. Homodimer.

The protein localises to the cytoplasm. It is found in the nucleoid. In terms of biological role, binds to DNA and alters its conformation. May be involved in regulation of gene expression, nucleoid organization and DNA protection. In Rickettsia conorii (strain ATCC VR-613 / Malish 7), this protein is Nucleoid-associated protein RC1337.